The sequence spans 243 residues: Triosephosphate isomerase (243 aa).

9 to 11 (NWK) lines the substrate pocket. The Electrophile role is filled by His96. Glu165 acts as the Proton acceptor in catalysis. Substrate contacts are provided by residues Gly171, Ser204, and 225-226 (GG).

This sequence belongs to the triosephosphate isomerase family. As to quaternary structure, homodimer.

It is found in the cytoplasm. The catalysed reaction is D-glyceraldehyde 3-phosphate = dihydroxyacetone phosphate. Its pathway is carbohydrate biosynthesis; gluconeogenesis. The protein operates within carbohydrate degradation; glycolysis; D-glyceraldehyde 3-phosphate from glycerone phosphate: step 1/1. Functionally, involved in the gluconeogenesis. Catalyzes stereospecifically the conversion of dihydroxyacetone phosphate (DHAP) to D-glyceraldehyde-3-phosphate (G3P). This is Triosephosphate isomerase from Prochlorococcus marinus (strain SARG / CCMP1375 / SS120).